The following is a 177-amino-acid chain: ATP synthase subunit delta (177 aa).

It belongs to the ATPase delta chain family. In terms of assembly, F-type ATPases have 2 components, F(1) - the catalytic core - and F(0) - the membrane proton channel. F(1) has five subunits: alpha(3), beta(3), gamma(1), delta(1), epsilon(1). F(0) has three main subunits: a(1), b(2) and c(10-14). The alpha and beta chains form an alternating ring which encloses part of the gamma chain. F(1) is attached to F(0) by a central stalk formed by the gamma and epsilon chains, while a peripheral stalk is formed by the delta and b chains.

The protein localises to the cell inner membrane. In terms of biological role, f(1)F(0) ATP synthase produces ATP from ADP in the presence of a proton or sodium gradient. F-type ATPases consist of two structural domains, F(1) containing the extramembraneous catalytic core and F(0) containing the membrane proton channel, linked together by a central stalk and a peripheral stalk. During catalysis, ATP synthesis in the catalytic domain of F(1) is coupled via a rotary mechanism of the central stalk subunits to proton translocation. This protein is part of the stalk that links CF(0) to CF(1). It either transmits conformational changes from CF(0) to CF(1) or is implicated in proton conduction. This Aeromonas salmonicida (strain A449) protein is ATP synthase subunit delta.